The following is a 174-amino-acid chain: Cytidylate kinase (174 aa).

7–15 contacts ATP; sequence GLPGTGTTT.

It belongs to the cytidylate kinase family. Type 2 subfamily.

It localises to the cytoplasm. It catalyses the reaction CMP + ATP = CDP + ADP. The enzyme catalyses dCMP + ATP = dCDP + ADP. The chain is Cytidylate kinase from Methanococcus vannielii (strain ATCC 35089 / DSM 1224 / JCM 13029 / OCM 148 / SB).